The following is a 383-amino-acid chain: Erythronate-4-phosphate dehydrogenase (383 aa).

Ser45 and Thr67 together coordinate substrate. An NAD(+)-binding site is contributed by Asp147. Arg208 is a catalytic residue. Residue Asp232 participates in NAD(+) binding. Glu237 is a catalytic residue. The active-site Proton donor is the His254. Residue Gly257 coordinates NAD(+). Tyr258 is a binding site for substrate.

This sequence belongs to the D-isomer specific 2-hydroxyacid dehydrogenase family. PdxB subfamily. As to quaternary structure, homodimer.

The protein localises to the cytoplasm. It carries out the reaction 4-phospho-D-erythronate + NAD(+) = (R)-3-hydroxy-2-oxo-4-phosphooxybutanoate + NADH + H(+). The protein operates within cofactor biosynthesis; pyridoxine 5'-phosphate biosynthesis; pyridoxine 5'-phosphate from D-erythrose 4-phosphate: step 2/5. Its function is as follows. Catalyzes the oxidation of erythronate-4-phosphate to 3-hydroxy-2-oxo-4-phosphonooxybutanoate. In Psychromonas ingrahamii (strain DSM 17664 / CCUG 51855 / 37), this protein is Erythronate-4-phosphate dehydrogenase.